The chain runs to 152 residues: SsrA-binding protein (152 aa).

The protein belongs to the SmpB family.

It localises to the cytoplasm. In terms of biological role, required for rescue of stalled ribosomes mediated by trans-translation. Binds to transfer-messenger RNA (tmRNA), required for stable association of tmRNA with ribosomes. tmRNA and SmpB together mimic tRNA shape, replacing the anticodon stem-loop with SmpB. tmRNA is encoded by the ssrA gene; the 2 termini fold to resemble tRNA(Ala) and it encodes a 'tag peptide', a short internal open reading frame. During trans-translation Ala-aminoacylated tmRNA acts like a tRNA, entering the A-site of stalled ribosomes, displacing the stalled mRNA. The ribosome then switches to translate the ORF on the tmRNA; the nascent peptide is terminated with the 'tag peptide' encoded by the tmRNA and targeted for degradation. The ribosome is freed to recommence translation, which seems to be the essential function of trans-translation. This chain is SsrA-binding protein, found in Helicobacter acinonychis (strain Sheeba).